Consider the following 286-residue polypeptide: Protein GrpE (286 aa).

2 disordered regions span residues 1–51 and 260–286; these read MSED…ETTA and VAAP…QPTT. 2 stretches are compositionally biased toward low complexity: residues 39–50 and 271–286; these read QPSSTPQTPETT and TEST…QPTT.

Belongs to the GrpE family. In terms of assembly, homodimer.

The protein localises to the cytoplasm. Participates actively in the response to hyperosmotic and heat shock by preventing the aggregation of stress-denatured proteins, in association with DnaK and GrpE. It is the nucleotide exchange factor for DnaK and may function as a thermosensor. Unfolded proteins bind initially to DnaJ; upon interaction with the DnaJ-bound protein, DnaK hydrolyzes its bound ATP, resulting in the formation of a stable complex. GrpE releases ADP from DnaK; ATP binding to DnaK triggers the release of the substrate protein, thus completing the reaction cycle. Several rounds of ATP-dependent interactions between DnaJ, DnaK and GrpE are required for fully efficient folding. This is Protein GrpE from Gloeothece citriformis (strain PCC 7424) (Cyanothece sp. (strain PCC 7424)).